The sequence spans 449 residues: MYHIWIKFLAAWIFLKRFNGVHVMQAKAPMYRNEPFLVFWNAPTTQCRLRYKVDLDLKTFHIVSNANDSLSGSAVTIFYPNHLGVYPHIDDRGHFFHGIIPQNESLTKHLNKSKSDINRIIPLKAFHGLGVIDWENWRPQWDRNWGSKNVYRNRSIQFARDLHPELSEDKIRRLAKKEYEKAAKSFMRDTLLLAEEMRPDGYWGYYLYPDCQNYDYKTKGDQYTGKCPEIEMSRNDQLLWLWRDSTALFPNVYLEIILRSSDNALKFVHHRLKEAMRIASMAREDYALPVFAYARPFYAYTFEPLTQEDLVTTVGETAAMGAAGIVFWGSMQYASTVDSCQKVKKYMNGPLGRYIVNVTTAAKICSRVLCRKNGRCVRKHSDSNAFLHLFPESFRIMVYANATEKKVIVKGKLELENLIYLRENFMCQCYQGWKGLYCEEYSIKDIRKI.

Positions 1–23 (MYHIWIKFLAAWIFLKRFNGVHV) are cleaved as a signal peptide. Intrachain disulfides connect cysteine 47/cysteine 340 and cysteine 211/cysteine 227. N-linked (GlcNAc...) asparagine glycans are attached at residues asparagine 67, asparagine 103, and asparagine 111. Catalysis depends on glutamate 135, which acts as the Proton donor. Asparagine 153 carries an N-linked (GlcNAc...) asparagine glycan. A glycan (N-linked (GlcNAc...) asparagine) is linked at asparagine 357. 3 disulfide bridges follow: cysteine 365–cysteine 376, cysteine 370–cysteine 427, and cysteine 429–cysteine 438. An N-linked (GlcNAc...) asparagine glycan is attached at asparagine 401. The EGF-like domain maps to 427–438 (CQCYQGWKGLYC).

Belongs to the glycosyl hydrolase 56 family. As to quaternary structure, monomer. In terms of tissue distribution, expressed by the venom gland.

The protein resides in the secreted. It catalyses the reaction Random hydrolysis of (1-&gt;4)-linkages between N-acetyl-beta-D-glucosamine and D-glucuronate residues in hyaluronate.. Its function is as follows. Snake venom endo-hyaluronidase that degrades hyaluronan to smaller oligosaccharide fragments. In venom, it is not toxic by itself, but increases the diffusion of other venom proteins by degrading the extracellular matrix. In addition, it displays antiedematogenic activity. This chain is Hyaluronidase-1, found in Cerastes cerastes (Horned desert viper).